The chain runs to 493 residues: Ribulose bisphosphate carboxylase large chain (493 aa).

N132 is a substrate binding site. C181 carries the post-translational modification S-nitrosocysteine. T182 contributes to the substrate binding site. The active-site Proton acceptor is K184. K186 lines the substrate pocket. Positions 210, 212, and 213 each coordinate Mg(2+). Residue K210 is modified to N6-carboxylysine. H302 (proton acceptor) is an active-site residue. Positions 303, 335, and 387 each coordinate substrate. Residue C460 is modified to S-nitrosocysteine.

Belongs to the RuBisCO large chain family. Type I subfamily. Heterohexadecamer of 8 large chains and 8 small chains. Requires Mg(2+) as cofactor.

It is found in the plastid. It localises to the chloroplast. The enzyme catalyses 2 (2R)-3-phosphoglycerate + 2 H(+) = D-ribulose 1,5-bisphosphate + CO2 + H2O. It catalyses the reaction D-ribulose 1,5-bisphosphate + O2 = 2-phosphoglycolate + (2R)-3-phosphoglycerate + 2 H(+). Functionally, ruBisCO catalyzes two reactions: the carboxylation of D-ribulose 1,5-bisphosphate, the primary event in carbon dioxide fixation, as well as the oxidative fragmentation of the pentose substrate in the photorespiration process. Both reactions occur simultaneously and in competition at the same active site. Carbon dioxide and oxygen bind in the same pocket of the enzyme in a similar manner. This Galdieria sulphuraria (Red alga) protein is Ribulose bisphosphate carboxylase large chain.